We begin with the raw amino-acid sequence, 455 residues long: uncharacterized protein (455 aa).

Residues N42, N49, and N70 are each glycosylated (N-linked (GlcNAc...) asparagine). 4 consecutive transmembrane segments (helical) span residues 127 to 147 (AILI…TWIF), 153 to 173 (SLLD…MFRI), 177 to 197 (ICAL…ITYY), and 377 to 397 (YKFC…EIIF). Residue N403 is glycosylated (N-linked (GlcNAc...) asparagine).

It is found in the membrane. This is an uncharacterized protein from Caenorhabditis elegans.